A 184-amino-acid polypeptide reads, in one-letter code: Translocon-associated protein subunit beta (184 aa).

A signal peptide spans 1–20; sequence MNFKTVISLFLVLFVSFVYC. Topologically, residues 21-147 are lumenal; the sequence is ENGAELLFHK…SQADYEKRTS (127 aa). N94 carries an N-linked (GlcNAc...) asparagine glycan. Residues 148–168 traverse the membrane as a helical segment; that stretch reads LLIKEWITFFVLCAGAIALPY. At 169 to 184 the chain is on the cytoplasmic side; it reads SISTYYKKNYENGIKK.

The protein belongs to the TRAP-beta family. Heterotrimer of TRAP-alpha, TRAP-beta and TRAP-gamma.

Its subcellular location is the endoplasmic reticulum membrane. In terms of biological role, TRAP proteins are part of a complex whose function is to bind calcium to the ER membrane and thereby regulate the retention of ER resident proteins. This is Translocon-associated protein subunit beta (ssr2) from Dictyostelium discoideum (Social amoeba).